The chain runs to 689 residues: DNA topoisomerase 1 (689 aa).

Positions 3–113 (DNLVIVESPA…KENRVVFNEI (111 aa)) constitute a Toprim domain. Mg(2+)-binding residues include E9 and D82. The Topo IA-type catalytic domain maps to 129–557 (EMNLVDAQQA…FFSSFKQDVE (429 aa)). The interaction with DNA stretch occupies residues 163–168 (SAGRVQ). Y298 serves as the catalytic O-(5'-phospho-DNA)-tyrosine intermediate. The interval 328 to 357 (SKRKASGKQGDQDAHEAIRPSSTMRTPDDM) is disordered. C4-type zinc fingers lie at residues 577 to 603 (CEVCGSPMVIKMGRYGKFMACSNFPDC), 617 to 645 (CPKCNDGDVVERKSKKNRVFYGCSKYPEC), and 658 to 681 (CPKCNQYLVENKKGKTTQVICSNC).

The protein belongs to the type IA topoisomerase family. As to quaternary structure, monomer. Requires Mg(2+) as cofactor.

It catalyses the reaction ATP-independent breakage of single-stranded DNA, followed by passage and rejoining.. In terms of biological role, releases the supercoiling and torsional tension of DNA, which is introduced during the DNA replication and transcription, by transiently cleaving and rejoining one strand of the DNA duplex. Introduces a single-strand break via transesterification at a target site in duplex DNA. The scissile phosphodiester is attacked by the catalytic tyrosine of the enzyme, resulting in the formation of a DNA-(5'-phosphotyrosyl)-enzyme intermediate and the expulsion of a 3'-OH DNA strand. The free DNA strand then undergoes passage around the unbroken strand, thus removing DNA supercoils. Finally, in the religation step, the DNA 3'-OH attacks the covalent intermediate to expel the active-site tyrosine and restore the DNA phosphodiester backbone. The polypeptide is DNA topoisomerase 1 (Staphylococcus aureus).